A 419-amino-acid polypeptide reads, in one-letter code: Tyrosine--tRNA ligase 1 (419 aa).

Residue Tyr35 participates in L-tyrosine binding. The short motif at 40 to 49 is the 'HIGH' region element; the sequence is PTAGSLHIGH. Residues Tyr172 and Gln176 each contribute to the L-tyrosine site. The 'KMSKS' region motif lies at 232–236; it reads KFGKT. Lys235 serves as a coordination point for ATP. Residues 353-418 enclose the S4 RNA-binding domain; sequence QDLVELLIES…KKHFCLVKRA (66 aa).

The protein belongs to the class-I aminoacyl-tRNA synthetase family. TyrS type 1 subfamily. In terms of assembly, homodimer.

It is found in the cytoplasm. The enzyme catalyses tRNA(Tyr) + L-tyrosine + ATP = L-tyrosyl-tRNA(Tyr) + AMP + diphosphate + H(+). Functionally, catalyzes the attachment of tyrosine to tRNA(Tyr) in a two-step reaction: tyrosine is first activated by ATP to form Tyr-AMP and then transferred to the acceptor end of tRNA(Tyr). The sequence is that of Tyrosine--tRNA ligase 1 from Vibrio parahaemolyticus serotype O3:K6 (strain RIMD 2210633).